The following is a 204-amino-acid chain: Phosphatidylserine decarboxylase proenzyme (204 aa).

The active-site Schiff-base intermediate with substrate; via pyruvic acid is serine 169. Serine 169 is modified (pyruvic acid (Ser); by autocatalysis).

Belongs to the phosphatidylserine decarboxylase family. PSD-A subfamily. Heterodimer of a large membrane-associated beta subunit and a small pyruvoyl-containing alpha subunit. Pyruvate is required as a cofactor. In terms of processing, is synthesized initially as an inactive proenzyme. Formation of the active enzyme involves a self-maturation process in which the active site pyruvoyl group is generated from an internal serine residue via an autocatalytic post-translational modification. Two non-identical subunits are generated from the proenzyme in this reaction, and the pyruvate is formed at the N-terminus of the alpha chain, which is derived from the carboxyl end of the proenzyme. The post-translation cleavage follows an unusual pathway, termed non-hydrolytic serinolysis, in which the side chain hydroxyl group of the serine supplies its oxygen atom to form the C-terminus of the beta chain, while the remainder of the serine residue undergoes an oxidative deamination to produce ammonia and the pyruvoyl prosthetic group on the alpha chain.

The protein localises to the cell membrane. It carries out the reaction a 1,2-diacyl-sn-glycero-3-phospho-L-serine + H(+) = a 1,2-diacyl-sn-glycero-3-phosphoethanolamine + CO2. The protein operates within phospholipid metabolism; phosphatidylethanolamine biosynthesis; phosphatidylethanolamine from CDP-diacylglycerol: step 2/2. Catalyzes the formation of phosphatidylethanolamine (PtdEtn) from phosphatidylserine (PtdSer). The sequence is that of Phosphatidylserine decarboxylase proenzyme from Solibacter usitatus (strain Ellin6076).